Consider the following 747-residue polypeptide: Protein O-mannosyl-transferase 1 (747 aa).

The next 7 helical transmembrane spans lie at 30–50 (PLVV…LGLL), 90–110 (FGHM…NFLW), 121–141 (VPVW…VPMA), 176–196 (LLES…LKFF), 205–225 (SVHW…AVGI), 228–248 (MGIF…WHLI), and 267–287 (VALL…HLML). MIR domains are found at residues 318–381 (PLEV…VKDP), 392–449 (PRPV…LDIV), and 453–513 (SNQD…VEEH). Residues Asn435, Asn471, and Asn539 are each glycosylated (N-linked (GlcNAc...) asparagine). A run of 3 helical transmembrane segments spans residues 597 to 617 (IVIW…FFWY), 636 to 656 (WVLA…PFFL), and 660 to 680 (MLFL…LPIV).

The protein belongs to the glycosyltransferase 39 family.

It localises to the endoplasmic reticulum membrane. It carries out the reaction a di-trans,poly-cis-dolichyl beta-D-mannosyl phosphate + L-seryl-[protein] = 3-O-(alpha-D-mannosyl)-L-seryl-[protein] + a di-trans,poly-cis-dolichyl phosphate + H(+). It catalyses the reaction a di-trans,poly-cis-dolichyl beta-D-mannosyl phosphate + L-threonyl-[protein] = 3-O-(alpha-D-mannosyl)-L-threonyl-[protein] + a di-trans,poly-cis-dolichyl phosphate + H(+). The protein operates within protein modification; protein glycosylation. Transfers mannosyl residues to the hydroxyl group of serine or threonine residues. Coexpression of both POMT1 and POMT2 is necessary for enzyme activity, expression of either POMT1 or POMT2 alone is insufficient. Essentially dedicated to O-mannosylation of alpha-DAG1 and few other proteins but not of cadherins and protocaherins. The polypeptide is Protein O-mannosyl-transferase 1 (Pomt1) (Rattus norvegicus (Rat)).